A 1239-amino-acid chain; its full sequence is DNA-directed RNA polymerase subunit beta (1239 aa).

The interval 1182–1239 is disordered; that stretch reads IEGAENQLEDKEEKEEEKEENYKEDSDEYDDLREEDVEPDLEELSLDDLDLDDFGDEH. 2 stretches are compositionally biased toward acidic residues: residues 1191–1200 and 1206–1239; these read DKEEKEEEKE and DSDEYDDLREEDVEPDLEELSLDDLDLDDFGDEH.

The protein belongs to the RNA polymerase beta chain family. As to quaternary structure, the RNAP catalytic core consists of 2 alpha, 1 beta, 1 beta' and 1 omega subunit. When a sigma factor is associated with the core the holoenzyme is formed, which can initiate transcription.

It catalyses the reaction RNA(n) + a ribonucleoside 5'-triphosphate = RNA(n+1) + diphosphate. In terms of biological role, DNA-dependent RNA polymerase catalyzes the transcription of DNA into RNA using the four ribonucleoside triphosphates as substrates. This chain is DNA-directed RNA polymerase subunit beta, found in Clostridium botulinum (strain Loch Maree / Type A3).